Consider the following 451-residue polypeptide: Phosphoglucosamine mutase (451 aa).

The active-site Phosphoserine intermediate is Ser107. Residues Ser107, Asp246, Asp248, and Asp250 each coordinate Mg(2+). Phosphoserine is present on Ser107.

This sequence belongs to the phosphohexose mutase family. Requires Mg(2+) as cofactor. Activated by phosphorylation.

It catalyses the reaction alpha-D-glucosamine 1-phosphate = D-glucosamine 6-phosphate. Its function is as follows. Catalyzes the conversion of glucosamine-6-phosphate to glucosamine-1-phosphate. This is Phosphoglucosamine mutase from Burkholderia cenocepacia (strain HI2424).